Consider the following 887-residue polypeptide: Alanine--tRNA ligase (887 aa).

His573, His577, Cys676, and His680 together coordinate Zn(2+).

It belongs to the class-II aminoacyl-tRNA synthetase family. The cofactor is Zn(2+).

It is found in the cytoplasm. It carries out the reaction tRNA(Ala) + L-alanine + ATP = L-alanyl-tRNA(Ala) + AMP + diphosphate. In terms of biological role, catalyzes the attachment of alanine to tRNA(Ala) in a two-step reaction: alanine is first activated by ATP to form Ala-AMP and then transferred to the acceptor end of tRNA(Ala). Also edits incorrectly charged Ser-tRNA(Ala) and Gly-tRNA(Ala) via its editing domain. This chain is Alanine--tRNA ligase, found in Corynebacterium jeikeium (strain K411).